The sequence spans 742 residues: Polyribonucleotide nucleotidyltransferase (742 aa).

Residues Asp-515 and Asp-521 each coordinate Mg(2+). In terms of domain architecture, KH spans 581 to 640 (PRIITITIPVDKIGEVIGPKGKIINQIQDDTGASISIEDDGTIYIGATNGEAAEAAKNAV). Positions 652–724 (GERYLGTVVK…DRGKLSLVPV (73 aa)) constitute an S1 motif domain.

This sequence belongs to the polyribonucleotide nucleotidyltransferase family. The cofactor is Mg(2+).

It localises to the cytoplasm. The enzyme catalyses RNA(n+1) + phosphate = RNA(n) + a ribonucleoside 5'-diphosphate. Its function is as follows. Involved in mRNA degradation. Catalyzes the phosphorolysis of single-stranded polyribonucleotides processively in the 3'- to 5'-direction. The chain is Polyribonucleotide nucleotidyltransferase from Nocardioides sp. (strain ATCC BAA-499 / JS614).